We begin with the raw amino-acid sequence, 444 residues long: Ribulose bisphosphate carboxylase large chain (444 aa).

Lysine 5 is subject to N6,N6,N6-trimethyllysine. Positions 114 and 164 each coordinate substrate. Lysine 166 serves as the catalytic Proton acceptor. Lysine 168 contacts substrate. The Mg(2+) site is built by lysine 192, aspartate 194, and glutamate 195. Lysine 192 carries the N6-carboxylysine modification. The active-site Proton acceptor is the histidine 285. Substrate is bound by residues arginine 286, histidine 318, and serine 370.

Belongs to the RuBisCO large chain family. Type I subfamily. In terms of assembly, heterohexadecamer of 8 large chains and 8 small chains; disulfide-linked. The disulfide link is formed within the large subunit homodimers. The cofactor is Mg(2+). Post-translationally, the disulfide bond which can form in the large chain dimeric partners within the hexadecamer appears to be associated with oxidative stress and protein turnover.

The protein localises to the plastid. It is found in the chloroplast. The catalysed reaction is 2 (2R)-3-phosphoglycerate + 2 H(+) = D-ribulose 1,5-bisphosphate + CO2 + H2O. It catalyses the reaction D-ribulose 1,5-bisphosphate + O2 = 2-phosphoglycolate + (2R)-3-phosphoglycerate + 2 H(+). In terms of biological role, ruBisCO catalyzes two reactions: the carboxylation of D-ribulose 1,5-bisphosphate, the primary event in carbon dioxide fixation, as well as the oxidative fragmentation of the pentose substrate in the photorespiration process. Both reactions occur simultaneously and in competition at the same active site. This Ginkgo biloba (Ginkgo) protein is Ribulose bisphosphate carboxylase large chain.